The primary structure comprises 1021 residues: Probable calcium-transporting ATPase 6, plasma membrane-type (1021 aa).

Residues 1–155 are Cytoplasmic-facing; the sequence is MEGGRSWSIE…RSFWMFVWDA (155 aa). Helical transmembrane passes span 156–176 and 181–201; these read LHDLTLIILVVCALVSIVVGL and WPMGIYDGFGIILSILLVVLV. Topologically, residues 202-241 are cytoplasmic; it reads TATSDYQQARKFMELDREKQKIYIRVTRDKKTKEVLVHDL. 2 helical membrane passes run 242–262 and 338–358; these read VVGDILHLSIGDVVPADGLFI and VATIIGQIGLVFAVLTFLVLL. Over 359-384 the chain is Cytoplasmic; sequence ARFLADKGMHVGLLNWSANDALTIVN. Residues 385-405 form a helical membrane-spanning segment; that stretch reads YFAIAVTIIVVAVPEGLPLAV. The active-site 4-aspartylphosphate intermediate is Asp441. Positions 740 and 744 each coordinate Mg(2+). The helical transmembrane segment at 807-827 threads the bilayer; it reads IVALIVNFVSACIIGSAPLTA. The Cytoplasmic segment spans residues 828–829; it reads VQ. 2 helical membrane-spanning segments follow: residues 830-850 and 879-899; these read LLWVNMIMDTLGALALATEPP and GLYQLLVLATLMVIGKKLLSI. The Cytoplasmic segment spans residues 900–942; the sequence is EGPQSDKTINTLIFNSFVFCQVFNEINCREMEKINVLQGIFRN. A run of 2 helical transmembrane segments spans residues 943 to 963 and 974 to 994; these read WIFVGILTATVIFQVIIVEFL and GELWLLSVVIGSISMIISVIL. Topologically, residues 995–1021 are cytoplasmic; it reads KCIPVEFNKTNTKPHGYELIPEGPEIL.

The protein belongs to the cation transport ATPase (P-type) (TC 3.A.3) family. Type IIB subfamily.

Its subcellular location is the membrane. It catalyses the reaction Ca(2+)(in) + ATP + H2O = Ca(2+)(out) + ADP + phosphate + H(+). With respect to regulation, activated by calmodulin. Functionally, this magnesium-dependent enzyme catalyzes the hydrolysis of ATP coupled with the translocation of calcium from the cytosol out of the cell, into the endoplasmic reticulum, or into organelles. This is Probable calcium-transporting ATPase 6, plasma membrane-type from Oryza sativa subsp. japonica (Rice).